The primary structure comprises 261 residues: tRNA pseudouridine synthase A (261 aa).

Catalysis depends on aspartate 51, which acts as the Nucleophile. Tyrosine 109 serves as a coordination point for substrate.

It belongs to the tRNA pseudouridine synthase TruA family. In terms of assembly, homodimer.

It catalyses the reaction uridine(38/39/40) in tRNA = pseudouridine(38/39/40) in tRNA. Formation of pseudouridine at positions 38, 39 and 40 in the anticodon stem and loop of transfer RNAs. In Shewanella halifaxensis (strain HAW-EB4), this protein is tRNA pseudouridine synthase A.